The chain runs to 263 residues: Tryptophan synthase alpha chain (263 aa).

Residues glutamate 46 and aspartate 57 each act as proton acceptor in the active site.

The protein belongs to the TrpA family. In terms of assembly, tetramer of two alpha and two beta chains.

It catalyses the reaction (1S,2R)-1-C-(indol-3-yl)glycerol 3-phosphate + L-serine = D-glyceraldehyde 3-phosphate + L-tryptophan + H2O. Its pathway is amino-acid biosynthesis; L-tryptophan biosynthesis; L-tryptophan from chorismate: step 5/5. The alpha subunit is responsible for the aldol cleavage of indoleglycerol phosphate to indole and glyceraldehyde 3-phosphate. The chain is Tryptophan synthase alpha chain from Bacteroides fragilis (strain ATCC 25285 / DSM 2151 / CCUG 4856 / JCM 11019 / LMG 10263 / NCTC 9343 / Onslow / VPI 2553 / EN-2).